The sequence spans 365 residues: Chorismate synthase (365 aa).

NADP(+)-binding residues include Arg48 and Arg54. Residues 125 to 127 (RSS), 238 to 239 (NA), Ala278, 293 to 297 (KPTSS), and Arg319 contribute to the FMN site.

Belongs to the chorismate synthase family. Homotetramer. The cofactor is FMNH2.

It catalyses the reaction 5-O-(1-carboxyvinyl)-3-phosphoshikimate = chorismate + phosphate. It participates in metabolic intermediate biosynthesis; chorismate biosynthesis; chorismate from D-erythrose 4-phosphate and phosphoenolpyruvate: step 7/7. Its function is as follows. Catalyzes the anti-1,4-elimination of the C-3 phosphate and the C-6 proR hydrogen from 5-enolpyruvylshikimate-3-phosphate (EPSP) to yield chorismate, which is the branch point compound that serves as the starting substrate for the three terminal pathways of aromatic amino acid biosynthesis. This reaction introduces a second double bond into the aromatic ring system. This Pseudoalteromonas translucida (strain TAC 125) protein is Chorismate synthase.